The chain runs to 178 residues: Caveolin-1 (178 aa).

Residue S2 is modified to N-acetylserine. S2 carries the phosphoserine modification. The tract at residues S2–V94 is required for homooligomerization. Topologically, residues S2–S104 are cytoplasmic. The residue at position 5 (K5) is an N6-acetyllysine; alternate. A Glycyl lysine isopeptide (Lys-Gly) (interchain with G-Cter in ubiquitin); alternate cross-link involves residue K5. Y6 carries the phosphotyrosine modification. S9 is subject to Phosphoserine. Y14 carries the phosphotyrosine; by ABL1 modification. Residue Y25 is modified to Phosphotyrosine. Residues K26, K30, K39, K47, and K57 each participate in a glycyl lysine isopeptide (Lys-Gly) (interchain with G-Cter in ubiquitin) cross-link. The segment at D82–V94 is interaction with CAVIN3. The helical intramembrane region spans A105 to L125. Residues H126–I178 are Cytoplasmic-facing. Residues V131–Q142 form an interacts with SPRY1, SPRY2, SPRY3 and SPRY4 region. 3 S-palmitoyl cysteine lipidation sites follow: C133, C143, and C156. The interval S149–F160 is interacts with SPRY1, SPRY2, and SPRY4. The segment at F167 to I178 is interacts with SPRY1, SPRY2, SPRY3 and SPRY4.

This sequence belongs to the caveolin family. In terms of assembly, homooligomer. Interacts with GLIPR2. Interacts with NOSTRIN. Interacts with SNAP25 and STX1A. Interacts (via the N-terminus) with DPP4; the interaction is direct. Interacts with CTNNB1, CDH1 and JUP. Interacts with PACSIN2; this interaction induces membrane tubulation. Interacts with SLC7A9. Interacts with BMX and BTK. Interacts with TGFBR1. Interacts with CAVIN3 (via leucine-zipper domain) in a cholesterol-sensitive manner. Interacts with CAVIN1. Interacts with EHD2 in a cholesterol-dependent manner. Forms a ternary complex with UBXN6 and VCP; mediates CAV1 targeting to lysosomes for degradation. Interacts with ABCG1; this interaction regulates ABCG1-mediated cholesterol efflux. Interacts with NEU3; this interaction enhances NEU3 sialidase activity within caveola. Interacts (via C-terminus) with SPRY1, SPRY2 (via C-terminus), SPRY3, and SPRY4. Interacts with IGFBP5; this interaction allows trafficking of IGFBP5 from the plasma membrane to the nucleus. Phosphorylated at Tyr-14 by ABL1 in response to oxidative stress. In terms of processing, ubiquitinated. Undergo monoubiquitination and multi- and/or polyubiquitination. Monoubiquitination of N-terminal lysines promotes integration in a ternary complex with UBXN6 and VCP which promotes oligomeric CAV1 targeting to lysosomes for degradation. Ubiquitinated by ZNRF1; leading to degradation and modulation of the TLR4-mediated immune response.

Its subcellular location is the golgi apparatus membrane. It localises to the cell membrane. The protein resides in the membrane. It is found in the caveola. The protein localises to the membrane raft. In terms of biological role, may act as a scaffolding protein within caveolar membranes. Forms a stable heterooligomeric complex with CAV2 that targets to lipid rafts and drives caveolae formation. Mediates the recruitment of CAVIN proteins (CAVIN1/2/3/4) to the caveolae. Interacts directly with G-protein alpha subunits and can functionally regulate their activity. Involved in the costimulatory signal essential for T-cell receptor (TCR)-mediated T-cell activation. Its binding to DPP4 induces T-cell proliferation and NF-kappa-B activation in a T-cell receptor/CD3-dependent manner. Recruits CTNNB1 to caveolar membranes and may regulate CTNNB1-mediated signaling through the Wnt pathway. Negatively regulates TGFB1-mediated activation of SMAD2/3 by mediating the internalization of TGFBR1 from membrane rafts leading to its subsequent degradation. Binds 20(S)-hydroxycholesterol (20(S)-OHC). This chain is Caveolin-1 (CAV1), found in Didelphis virginiana (North American opossum).